The primary structure comprises 192 residues: Thymidine kinase (192 aa).

Residues 9–16 (GAMNSGKS) and 85–88 (DEVQ) each bind ATP. The active-site Proton acceptor is glutamate 86. Zn(2+) contacts are provided by cysteine 143, cysteine 146, cysteine 181, and cysteine 184.

The protein belongs to the thymidine kinase family. In terms of assembly, homotetramer.

The protein localises to the cytoplasm. The catalysed reaction is thymidine + ATP = dTMP + ADP + H(+). This chain is Thymidine kinase, found in Shouchella clausii (strain KSM-K16) (Alkalihalobacillus clausii).